A 357-amino-acid chain; its full sequence is Transcription factor HHO1 (357 aa).

2 disordered regions span residues 94–117 (TSIE…ETDI) and 171–198 (NNNI…RKNR). The span at 96-109 (IEEEVDDKDDDDEE) shows a compositional bias: acidic residues. Residues 171 to 182 (NNNIKSPVTTSD) are compositionally biased toward polar residues. Residues 193 to 253 (GQRKNRRCWS…HLQKYRLHAR (61 aa)) enclose the HTH myb-type domain. Positions 224–249 (PKQIRDIMKVDGLTNDEVKSHLQKYR) form a DNA-binding region, H-T-H motif.

It localises to the nucleus. Probable factor involved in nitrate and phosphate signaling in roots. Integrates nitrate and phosphate starvation responses and adaptation of root architecture, depending on nutrient availabilities. Acts downstream of the nitrate sensor and transporter NPF6.3/NRT1.1. Represses primary root development in response to phosphate deficiency conditions, only when nitrate is present. The protein is Transcription factor HHO1 of Arabidopsis thaliana (Mouse-ear cress).